A 388-amino-acid chain; its full sequence is 5-hydroxytryptamine receptor 4 (388 aa).

Topologically, residues 1–19 are extracellular; it reads MDKLDANVSSEEGFGSVEK. The N-linked (GlcNAc...) asparagine glycan is linked to Asn7. Residues 20–44 traverse the membrane as a helical segment; sequence VVLLTFLSTVILMAILGNLLVMVAV. The Cytoplasmic segment spans residues 45 to 54; that stretch reads CWDRQLRKIK. Residues 55-78 form a helical membrane-spanning segment; sequence TNYFIVSLAFADLLVSVLVMPFGA. The Extracellular portion of the chain corresponds to 79–92; that stretch reads IELVQDIWIYGEVF. Residues 93-117 form a helical membrane-spanning segment; that stretch reads CLVRTSLDVLLTTASIFHLCCISLD. Cys93 and Cys184 form a disulfide bridge. Asp100 contacts serotonin. Residues 118–133 lie on the Cytoplasmic side of the membrane; the sequence is RYYAICCQPLVYRNKM. Residues 134–157 form a helical membrane-spanning segment; the sequence is TPLRIALMLGGCWVIPTFISFLPI. Topologically, residues 158-188 are extracellular; sequence MQGWNNIGIIDLIEKRKFNQNSNSTYCVFMV. The chain crosses the membrane as a helical span at residues 189–212; sequence NKPYAITCSVVAFYIPFLLMVLAY. Topologically, residues 213–257 are cytoplasmic; the sequence is YRIYVTAKEHAHQIQMLQRAGASSESRPQSADQHSTHRMRTETKA. A helical membrane pass occupies residues 258 to 283; it reads AKTLCIIMGCFCLCWAPFFVTNIVDP. Asn279 is a binding site for serotonin. Residues 284–290 are Extracellular-facing; it reads FIDYTVP. A helical transmembrane segment spans residues 291-314; that stretch reads GQVWTAFLWLGYINSGLNPFLYAF. The Cytoplasmic portion of the chain corresponds to 315–388; it reads LNKSFRRAFL…PLVAAQPSDT (74 aa).

This sequence belongs to the G-protein coupled receptor 1 family. In terms of assembly, interacts (via C-terminus 330-346 AA) with GRK5; this interaction is promoted by 5-HT (serotonin). As to quaternary structure, interacts with MAGI2, MPP3, NHERF1 and SNX27 isoforms 1 and 2. Forms a complex including NHERF1 and EZR. Interacts with PATJ, NOS1 and SEC23A. Expressed in ileum, brain, and atrium, but not in the ventricle. In terms of tissue distribution, mainly expressed in atria and cardiac ventricle. As to expression, expressed in all cardiovascular tissues analyzed.

Its subcellular location is the cell membrane. The protein resides in the endosome membrane. Its function is as follows. G-protein coupled receptor for 5-hydroxytryptamine (serotonin), a biogenic hormone that functions as a neurotransmitter, a hormone and a mitogen. Ligand binding causes a conformation change that triggers signaling via guanine nucleotide-binding proteins (G proteins) and modulates the activity of downstream effectors. HTR4 is coupled to G(s) G alpha proteins and mediates activation of adenylate cyclase activity. The protein is 5-hydroxytryptamine receptor 4 of Homo sapiens (Human).